The sequence spans 214 residues: DELTA-actitoxin-Aeq1b (214 aa).

An N-terminal signal peptide occupies residues 1–19 (MSRLIIVFIVVTMICAATA). A propeptide spanning residues 20 to 35 (LSSKKSINEDEKDEKR) is cleaved from the precursor. Residues 38 to 47 (AVAGAVIEGA) are plays an important role in the hemolytic activity. Residues 46–65 (GATLTFNVLQTVLKALGDIS) form an N-terminal region region. Phosphocholine contacts are provided by Ser89, Val122, Ser140, Pro142, Tyr168, Tyr172, and Tyr173. The segment at 140–155 (SIPFDYNLYSNWWNVK) is trp-rich region, which is important for the binding to lipid membrane. A Cell attachment site, crucial for protein stability motif is present at residues 179-181 (RGD).

This sequence belongs to the actinoporin family. Sea anemone subfamily. Octamer or nonamer in membranes. Monomer in the soluble state.

The protein localises to the secreted. The protein resides in the nematocyst. It is found in the target cell membrane. Pore-forming protein that forms cations-selective hydrophilic pores of around 1 nm and causes cytolysis. Pore formation is a multi-step process that involves specific recognition of membrane sphingomyelin (but neither cholesterol nor phosphatidylcholine) using aromatic rich region and adjacent phosphocholine (POC) binding site, firm binding to the membrane (mainly driven by hydrophobic interactions) accompanied by the transfer of the N-terminal region to the lipid-water interface and finally pore formation after oligomerization of monomers. The chain is DELTA-actitoxin-Aeq1b from Actinia equina (Beadlet anemone).